A 383-amino-acid polypeptide reads, in one-letter code: Agmatine deiminase (383 aa).

Agmatine-binding residues include Asp-220 and Asp-226. Residue Cys-366 is the Amidino-cysteine intermediate of the active site.

Belongs to the agmatine deiminase family. In terms of assembly, forms homodimers.

The catalysed reaction is agmatine + H2O = N-carbamoylputrescine + NH4(+). Its pathway is amine and polyamine biosynthesis; putrescine biosynthesis via agmatine pathway; N-carbamoylputrescine from agmatine: step 1/1. Its activity is regulated as follows. Inhibited by N-ethylmaleimide and iodoacetamide. Its function is as follows. Mediates the hydrolysis of agmatine into N-carbamoylputrescine in the arginine decarboxylase (ADC) pathway of putrescine biosynthesis, a basic polyamine. This is Agmatine deiminase (AIH) from Arabidopsis thaliana (Mouse-ear cress).